We begin with the raw amino-acid sequence, 143 residues long: Large ribosomal subunit protein uL11 (143 aa).

It belongs to the universal ribosomal protein uL11 family. As to quaternary structure, part of the ribosomal stalk of the 50S ribosomal subunit. Interacts with L10 and the large rRNA to form the base of the stalk. L10 forms an elongated spine to which L12 dimers bind in a sequential fashion forming a multimeric L10(L12)X complex. In terms of processing, one or more lysine residues are methylated.

Forms part of the ribosomal stalk which helps the ribosome interact with GTP-bound translation factors. This Paraburkholderia phymatum (strain DSM 17167 / CIP 108236 / LMG 21445 / STM815) (Burkholderia phymatum) protein is Large ribosomal subunit protein uL11.